Reading from the N-terminus, the 188-residue chain is MATAGMNDVKNGMKILVNNEPAVISETEFIKPGKGQAFTRVRYRFIKSGRTVEMTMKATDDVEVADVVDTNMDYMYSDGEYWHFMDPETFEQVQADKAGMGGAEKWLKGEESCIVTLFNGSPIFVQPPNFVELKITETDPGVRGDTSGGGGKPATLETGAVVRVPLFVNQDEIIKVDTRSGEYSSRVK.

Residue Lys-34 is modified to N6-(3,6-diaminohexanoyl)-5-hydroxylysine.

It belongs to the elongation factor P family. In terms of processing, may be beta-lysylated on the epsilon-amino group of Lys-34 by the combined action of EpmA and EpmB, and then hydroxylated on the C5 position of the same residue by EpmC (if this protein is present). Lysylation is critical for the stimulatory effect of EF-P on peptide-bond formation. The lysylation moiety may extend toward the peptidyltransferase center and stabilize the terminal 3-CCA end of the tRNA. Hydroxylation of the C5 position on Lys-34 may allow additional potential stabilizing hydrogen-bond interactions with the P-tRNA.

The protein resides in the cytoplasm. It participates in protein biosynthesis; polypeptide chain elongation. In terms of biological role, involved in peptide bond synthesis. Alleviates ribosome stalling that occurs when 3 or more consecutive Pro residues or the sequence PPG is present in a protein, possibly by augmenting the peptidyl transferase activity of the ribosome. Modification of Lys-34 is required for alleviation. The chain is Elongation factor P from Stenotrophomonas maltophilia (strain R551-3).